The chain runs to 479 residues: Anaerobic nitric oxide reductase flavorubredoxin (479 aa).

A zinc metallo-hydrolase region spans residues 30-210 (LRGSSYNSYL…PFSRLVTPKI (181 aa)). 6 residues coordinate Fe cation: histidine 79, glutamate 81, aspartate 83, histidine 147, aspartate 166, and histidine 227. Residues 254–393 (ITIVYDTMSN…LCREHGREIA (140 aa)) form the Flavodoxin-like domain. FMN-binding positions include 260-264 (TMSNN) and 342-369 (AFGS…EMSL). Residues 423–474 (GPRMQCSVCQWIYDPAKGEPMQDVAPGTPWSEVPDNFLCPECSLGKDVFDEL) form the Rubredoxin-like domain. Positions 428, 431, 461, and 464 each coordinate Fe cation.

In the N-terminal section; belongs to the zinc metallo-hydrolase group 3 family. As to quaternary structure, homotetramer. It depends on Fe cation as a cofactor. FMN is required as a cofactor.

The protein localises to the cytoplasm. The protein operates within nitrogen metabolism; nitric oxide reduction. Its function is as follows. Anaerobic nitric oxide reductase; uses NADH to detoxify nitric oxide (NO), protecting several 4Fe-4S NO-sensitive enzymes. Has at least 2 reductase partners, only one of which (NorW, flavorubredoxin reductase) has been identified. NO probably binds to the di-iron center; electrons enter from the NorW at rubredoxin and are transferred sequentially to the FMN center and the di-iron center. Also able to function as an aerobic oxygen reductase. This Escherichia coli (strain UTI89 / UPEC) protein is Anaerobic nitric oxide reductase flavorubredoxin.